Reading from the N-terminus, the 378-residue chain is UPF0754 membrane protein BCAH820_0954 (378 aa).

Transmembrane regions (helical) follow at residues 1–21 (MNIWLSMLTTTGLGAIIGGFT) and 357–377 (YLGALLGGMIGIVQGLLLLFL).

It belongs to the UPF0754 family.

Its subcellular location is the cell membrane. In Bacillus cereus (strain AH820), this protein is UPF0754 membrane protein BCAH820_0954.